The primary structure comprises 467 residues: Ribosome biogenesis protein YTM1 (467 aa).

The segment at 8–95 is ubiquitin-like (UBL) domain; the sequence is IKIKFFTNEE…ETFLSLEYTR (88 aa). The interval 105–467 is sufficient for interaction with ERB1 and association with 66S pre-ribosomes; it reads SFNNEDWISS…QINKGSDISK (363 aa). WD repeat units lie at residues 120-159, 161-199, 216-255, 293-333, 335-374, 382-422, and 432-467; these read KTLPSVTLSNMMISQPKILSGSYDGIVRTYNMSGNVEKQY, GHSGPIRAVKWVSPTRIVSAGNDRQVRLWKTSADDGSIP, GHKAPVVALAVENTSNRILSAGYDHSIGFWSTNYKEMTTI, SHTQ…CIDT, STGYSLLSIVQLPKSKLLATGSSARHINLHDPRISNNTTE, GHTN…SLYT, and KGADKVFAVSWDNEIGIISGGQDKKIQINKGSDISK.

The protein belongs to the WD repeat WDR12/YTM1 family. In terms of assembly, component of the NOP7 complex, composed of ERB1, NOP7 and YTM1. The complex is held together by ERB1, which interacts with NOP7 via its N-terminal domain and with YTM1 via a high-affinity interaction between the seven-bladed beta-propeller domains of the 2 proteins. The NOP7 complex associates with the 66S pre-ribosome. Interacts (via UBL domain) with MDN1 (via VWFA/MIDAS domain).

Its subcellular location is the nucleus. It localises to the nucleolus. It is found in the nucleoplasm. Its function is as follows. Component of the NOP7 complex, which is required for maturation of the 25S and 5.8S ribosomal RNAs and formation of the 60S ribosome. The chain is Ribosome biogenesis protein YTM1 from Scheffersomyces stipitis (strain ATCC 58785 / CBS 6054 / NBRC 10063 / NRRL Y-11545) (Yeast).